The chain runs to 152 residues: UPF0178 protein YaiI (152 aa).

Belongs to the UPF0178 family.

The polypeptide is UPF0178 protein YaiI (Shigella flexneri).